The sequence spans 493 residues: 11S globulin seed storage protein G3 (493 aa).

The first 20 residues, 1 to 20 (MASKATLLLAFTLLFATCIA), serve as a signal peptide directing secretion. Disulfide bonds link Cys32–Cys65 and Cys103–Cys312. A Cupin type-1 1 domain is found at 37–248 (IEALEPIEVI…SFNVDQETAQ (212 aa)). 2 disordered regions span residues 190–229 (PQAQ…NIFN) and 269–305 (IVRP…GWSN). Composition is skewed to low complexity over residues 191-221 (QAQA…QGQG) and 280-298 (RQQQ…QQQG). The Cupin type-1 2 domain occupies 318–467 (VNIDNPSQAD…RYQLSREEAQ (150 aa)).

This sequence belongs to the 11S seed storage protein (globulins) family. Hexamer; each subunit is composed of an acidic and a basic chain derived from a single precursor and linked by a disulfide bond.

Its function is as follows. This is a seed storage protein. This Helianthus annuus (Common sunflower) protein is 11S globulin seed storage protein G3 (HAG3).